Here is a 396-residue protein sequence, read N- to C-terminus: Probable sugar efflux transporter (396 aa).

The next 12 membrane-spanning stretches (helical) occupy residues 15-35 (VVTL…PVGL), 50-70 (VGIM…PFML), 81-101 (LICL…SWSF), 103-123 (VLVI…SITA), 136-156 (AQAL…GLPL), 170-190 (FFAI…LLPL), 209-229 (PALM…YTAY), 246-266 (FATA…VIFG), 275-295 (ALVS…LPAA), 299-319 (IHLG…GLGM), 333-353 (VAMA…ALVG), and 364-384 (MIGY…IIIF).

The protein belongs to the major facilitator superfamily. SotB (TC 2.A.1.2) family.

The protein localises to the cell inner membrane. Involved in the efflux of sugars. The physiological role may be the reduction of the intracellular concentration of toxic sugars or sugar metabolites. In Shigella boydii serotype 18 (strain CDC 3083-94 / BS512), this protein is Probable sugar efflux transporter.